A 184-amino-acid chain; its full sequence is Probable RNA 2'-phosphotransferase (184 aa).

Belongs to the KptA/TPT1 family.

Removes the 2'-phosphate from RNA via an intermediate in which the phosphate is ADP-ribosylated by NAD followed by a presumed transesterification to release the RNA and generate ADP-ribose 1''-2''-cyclic phosphate (APPR&gt;P). May function as an ADP-ribosylase. The sequence is that of Probable RNA 2'-phosphotransferase from Rhizobium johnstonii (strain DSM 114642 / LMG 32736 / 3841) (Rhizobium leguminosarum bv. viciae).